Consider the following 883-residue polypeptide: Alanine--tRNA ligase (883 aa).

The Zn(2+) site is built by His-570, His-574, Cys-672, and His-676.

The protein belongs to the class-II aminoacyl-tRNA synthetase family. The cofactor is Zn(2+).

The protein localises to the cytoplasm. The enzyme catalyses tRNA(Ala) + L-alanine + ATP = L-alanyl-tRNA(Ala) + AMP + diphosphate. In terms of biological role, catalyzes the attachment of alanine to tRNA(Ala) in a two-step reaction: alanine is first activated by ATP to form Ala-AMP and then transferred to the acceptor end of tRNA(Ala). Also edits incorrectly charged Ser-tRNA(Ala) and Gly-tRNA(Ala) via its editing domain. The chain is Alanine--tRNA ligase from Heliobacterium modesticaldum (strain ATCC 51547 / Ice1).